A 649-amino-acid polypeptide reads, in one-letter code: tRNA-guanine(15) transglycosylase (649 aa).

The active-site Nucleophile is the Asp88. Substrate-binding residues include Asp123 and Ala194. Residues Cys280, Cys282, and Cys285 each coordinate Zn(2+). The PUA domain maps to 572-647 (KYRVIVDKSV…VAVNIRGGLK (76 aa)).

It belongs to the archaeosine tRNA-ribosyltransferase family. Zn(2+) is required as a cofactor.

The catalysed reaction is guanosine(15) in tRNA + 7-cyano-7-deazaguanine = 7-cyano-7-carbaguanosine(15) in tRNA + guanine. Its pathway is tRNA modification; archaeosine-tRNA biosynthesis. Its function is as follows. Exchanges the guanine residue with 7-cyano-7-deazaguanine (preQ0) at position 15 in the dihydrouridine loop (D-loop) of archaeal tRNAs. The sequence is that of tRNA-guanine(15) transglycosylase from Methanococcus vannielii (strain ATCC 35089 / DSM 1224 / JCM 13029 / OCM 148 / SB).